A 111-amino-acid polypeptide reads, in one-letter code: Macrodomain Ori protein (111 aa).

It belongs to the MaoP family.

Functionally, involved in the organization of the Ori region of the chromosome into a macrodomain (MD). It constrains DNA mobility in the Ori macrodomain and limits long-distance DNA interactions with other chromosomal regions. This Haemophilus influenzae (strain ATCC 51907 / DSM 11121 / KW20 / Rd) protein is Macrodomain Ori protein.